The sequence spans 397 residues: Lysophospholipid transporter LplT (397 aa).

The Periplasmic segment spans residues 1 to 17; sequence MSESVHTNTSLWSKGMK. Residues 18-38 form a helical membrane-spanning segment; sequence AVIVAQFLSAFGDNALLFATL. Topologically, residues 39 to 52 are cytoplasmic; it reads ALLKAQFYPEWSQP. A helical transmembrane segment spans residues 53 to 73; sequence ILQMVFVGAYILFAPFVGQVA. Over 74–90 the chain is Periplasmic; sequence DSFAKGRVMMFANGLKL. A helical transmembrane segment spans residues 91-111; sequence LGAASICFGINPFLGYTLVGV. The Cytoplasmic segment spans residues 112-144; it reads GAAAYSPAKYGILGELTTGSKLVKANGLMEAST. A helical membrane pass occupies residues 145-165; it reads IAAILLGSVAGGVLADWHVLV. Position 166 (Ala166) is a topological domain, periplasmic. Residues 167-187 traverse the membrane as a helical segment; sequence LAACALAYGGAVVANIYIPKL. At 188–226 the chain is on the cytoplasmic side; that stretch reads AAARPGQSWNLINMTRSFLNACTSLWRNGETRFSLVGTS. A helical membrane pass occupies residues 227 to 247; the sequence is LFWGAGVTLRFLLVLWVPVAL. Topologically, residues 248–256 are periplasmic; it reads GITDNATPT. The chain crosses the membrane as a helical span at residues 257 to 277; it reads YLNAMVAIGIVVGAGAAAKLV. Over 278–280 the chain is Cytoplasmic; it reads TLE. A helical transmembrane segment spans residues 281–301; sequence TMSRCMPAGILIGVVVLIFSL. Residues 302–304 are Periplasmic-facing; sequence QHE. Residues 305–325 form a helical membrane-spanning segment; that stretch reads LLPAYALLMLIGVMGGFFVVP. Residues 326–343 are Cytoplasmic-facing; sequence LNALLQERGKKSVGAGNA. A helical transmembrane segment spans residues 344-364; it reads IAVQNLGENSAMLLMLGIYSL. The Periplasmic segment spans residues 365–366; sequence AV. Residues 367–387 traverse the membrane as a helical segment; the sequence is MVGIPVVPIGIGFGALFALAI. Over 388 to 397 the chain is Cytoplasmic; sequence TALWIWQRRH.

The protein belongs to the major facilitator superfamily. LplT (TC 2.A.1.42) family.

The protein localises to the cell inner membrane. Its function is as follows. Catalyzes the facilitated diffusion of 2-acyl-glycero-3-phosphoethanolamine (2-acyl-GPE) into the cell. The polypeptide is Lysophospholipid transporter LplT (Shigella sonnei (strain Ss046)).